The sequence spans 436 residues: Methylenetetrahydrofolate--tRNA-(uracil-5-)-methyltransferase TrmFO (436 aa).

Position 7–12 (7–12) interacts with FAD; it reads GAGLAG.

Belongs to the MnmG family. TrmFO subfamily. It depends on FAD as a cofactor.

It localises to the cytoplasm. It carries out the reaction uridine(54) in tRNA + (6R)-5,10-methylene-5,6,7,8-tetrahydrofolate + NADH + H(+) = 5-methyluridine(54) in tRNA + (6S)-5,6,7,8-tetrahydrofolate + NAD(+). The catalysed reaction is uridine(54) in tRNA + (6R)-5,10-methylene-5,6,7,8-tetrahydrofolate + NADPH + H(+) = 5-methyluridine(54) in tRNA + (6S)-5,6,7,8-tetrahydrofolate + NADP(+). In terms of biological role, catalyzes the folate-dependent formation of 5-methyl-uridine at position 54 (M-5-U54) in all tRNAs. This chain is Methylenetetrahydrofolate--tRNA-(uracil-5-)-methyltransferase TrmFO, found in Caldicellulosiruptor bescii (strain ATCC BAA-1888 / DSM 6725 / KCTC 15123 / Z-1320) (Anaerocellum thermophilum).